The primary structure comprises 528 residues: Oxamate amidohydrolase proenzyme (528 aa).

The active-site Nucleophile is Thr342. Residue 424 to 425 coordinates substrate; the sequence is GG.

This sequence belongs to the gamma-glutamyltransferase family. As to quaternary structure, heterodimer that consists of a 35.5 kDa large (alpha) subunit and a 20 kDa small (beta) subunit, which are synthesized from a single polypeptide. Cleaved by autocatalysis into a large (alpha) and a small (beta) subunit.

The enzyme catalyses oxamate + H2O = oxalate + NH4(+). Functionally, involved in the uric acid degradation pathway. Catalyzes the conversion of oxamate to oxalate. The sequence is that of Oxamate amidohydrolase proenzyme from Klebsiella pneumoniae subsp. pneumoniae (strain ATCC 700721 / MGH 78578).